The chain runs to 199 residues: Large ribosomal subunit protein bL25 (199 aa).

It belongs to the bacterial ribosomal protein bL25 family. CTC subfamily. As to quaternary structure, part of the 50S ribosomal subunit; part of the 5S rRNA/L5/L18/L25 subcomplex. Contacts the 5S rRNA. Binds to the 5S rRNA independently of L5 and L18.

Functionally, this is one of the proteins that binds to the 5S RNA in the ribosome where it forms part of the central protuberance. The sequence is that of Large ribosomal subunit protein bL25 from Syntrophobacter fumaroxidans (strain DSM 10017 / MPOB).